The sequence spans 424 residues: 5,5'-dehydrodivanillate O-demethylase oxygenase subunit (424 aa).

The Rieske domain occupies 27-135 (WHPIGGESEF…VRALGGLLWA (109 aa)). [2Fe-2S] cluster is bound by residues Cys-68, His-70, Cys-87, and His-90. Positions 181, 186, and 306 each coordinate Fe cation.

The protein belongs to the bacterial ring-hydroxylating dioxygenase alpha subunit family. Homotrimer. The three-component monooxygenase is composed of an oxygenase (LigXa), a ferredoxin (LigXc) and a ferredoxin reductase (LigXd). The cofactor is [2Fe-2S] cluster. Requires Fe cation as cofactor.

It carries out the reaction 5,5'-dehydrodivanillate + NADH + O2 + H(+) = 2,2',3-trihydroxy-3'-methoxy-5,5'-dicarboxybiphenyl + formaldehyde + NAD(+) + H2O. Functionally, involved in the catabolism of 5,5'-dehydrodivanillate (DDVA), an intermediate in the biodegradation of lignin. Part of a three-component monooxygenase that catalyzes the O-demethylation of DDVA, leading to the formation of 2,2',3-trihydroxy-3'-methoxy-5,5'-dicarboxybiphenyl (OH-DDVA). In Sphingobium sp. (strain NBRC 103272 / SYK-6), this protein is 5,5'-dehydrodivanillate O-demethylase oxygenase subunit.